The sequence spans 424 residues: Inhibin beta A chain (424 aa).

The first 20 residues, 1–20 (MPLLWLRGFLLASCWIIVRS), serve as a signal peptide directing secretion. The propeptide occupies 21–308 (SPTPGSEGHG…EDHPHRRRRR (288 aa)). Residue Asn-165 is glycosylated (N-linked (GlcNAc...) asparagine). Residues 264 to 275 (EVDGDGKKKDGS) show a composition bias toward basic and acidic residues. The interval 264–306 (EVDGDGKKKDGSDGGLEEEKEQSHRPFLMLQARQSEDHPHRRR) is disordered. Disulfide bonds link Cys-312-Cys-320, Cys-319-Cys-389, Cys-348-Cys-421, and Cys-352-Cys-423.

The protein belongs to the TGF-beta family. Dimeric, linked by one or more disulfide bonds. Inhibin A is a dimer of alpha/INHA and beta-A/INHBA. Activin A is a homodimer of beta-A/INHBA. Activin AB is a dimer of beta-A/INHBA and beta-B/INHBB. Interacts with FST and FSTL3; these interactions prevent activin A interaction to its type II receptor. Activin A interacts with ACVR2A. Activin A interacts with BMPR2. Inhibin A interacts with ACVR1; this interaction creates a non-signaling complex (NSC) that inhibits ACVR1-mediated BMP signaling. Inhibin A interacts with ACVR2A. In terms of tissue distribution, uterus, ovary and liver.

Its subcellular location is the secreted. Inhibins/activins are involved in regulating a number of diverse functions such as hypothalamic and pituitary hormone secretion, gonadal hormone secretion, germ cell development and maturation, erythroid differentiation, insulin secretion, nerve cell survival, embryonic axial development or bone growth, depending on their subunit composition. Its function is as follows. Activin A is a homodimer of INHBA that plays a role in several essential biological processes including embryonic development, stem cell maintenance and differentiation, haematopoiesis, cell proliferation and tissue fibrosis. Signals through type I (such as ACVR1B or ACVR1C) and type II receptors (such as ACVR2A, ACVR2B or BMPR2) which, upon ligand binding, phosphorylate SMAD2 and SMAD3 intracellular signaling mediators that form a complex with SMAD4, translocate to the nucleus and modulate gene expression. Can also activate alternative non-canonical intracellular signaling pathways including the p38 MAPK, extracellular signal-regulated kinases 1/2 (ERK1/2) and c-Jun N-terminal kinases (JNKs) to modulate cell migration and differentiation. Alternatively, promotes osteoblastic differentiation via ACVRL1-SMAD1/5/9 pathway. In addition, can engage the type I receptor ACVR1 to form an ACVR1-activin A-type II receptor non-signaling complex (NSC) that renders receptors unavailable for engagement with BMPs, hence resulting in an apparent inhibition of ACVR1-mediated BMP signaling. Functionally, inhibin A is a dimer of alpha/INHA and beta-A/INHBA that functions as a feedback regulator in the hypothalamic-pituitary-gonadal (HPG) axis. Inhibits the secretion of FSH from the anterior pituitary gland by acting on pituitary gonadotrope cells. Antagonizes activin A by binding to the proteoglycan, betaglycan, and forming a stable complex with and, thereby, sequestering type II activin receptors while excluding type I receptor. The polypeptide is Inhibin beta A chain (Inhba) (Mus musculus (Mouse)).